The primary structure comprises 306 residues: Recombination-associated protein RdgC (306 aa).

This sequence belongs to the RdgC family.

Its subcellular location is the cytoplasm. It localises to the nucleoid. Functionally, may be involved in recombination. The chain is Recombination-associated protein RdgC from Pseudomonas fluorescens (strain SBW25).